The following is a 635-amino-acid chain: Probable ethylene response sensor 2 (635 aa).

3 helical membrane passes run Ile-24–Val-44, Phe-59–Ile-79, and Ala-94–Leu-114. Cu cation is bound by residues Cys-66 and His-70. Residues Asp-159 to Leu-308 form the GAF domain. Positions Val-351–Glu-589 constitute a Histidine kinase domain. His-354 carries the phosphohistidine; by autocatalysis modification.

The protein belongs to the ethylene receptor family. In terms of assembly, homodimer. Cu cation is required as a cofactor. Expressed in anthers and hulls.

It localises to the endoplasmic reticulum membrane. The catalysed reaction is ATP + protein L-histidine = ADP + protein N-phospho-L-histidine.. Ethylene receptor related to bacterial two-component regulators. Acts as a negative regulator of ethylene signaling. May play a role in the regulation of flowering by up-regulating GI (GIGANTEA) and RCN1 and regulate starch accumulation by down-regulating the alpha-amylase AMY3D. The sequence is that of Probable ethylene response sensor 2 from Oryza sativa subsp. indica (Rice).